We begin with the raw amino-acid sequence, 496 residues long: NADP-dependent glyceraldehyde-3-phosphate dehydrogenase (496 aa).

Residues Arg116 and 169-170 (NY) contribute to the substrate site. Residues Lys192, Thr195, and Asp230 each contribute to the NADP(+) site. NAD(+) is bound at residue 245–249 (GGDTG). Residue Glu264 is the Proton acceptor of the active site. 297 to 299 (RCT) lines the substrate pocket. The active-site Nucleophile is Cys298. An NADP(+)-binding site is contributed by Glu391. Arg451 lines the substrate pocket.

This sequence belongs to the aldehyde dehydrogenase family.

It is found in the cytoplasm. It catalyses the reaction D-glyceraldehyde 3-phosphate + NADP(+) + H2O = (2R)-3-phosphoglycerate + NADPH + 2 H(+). In terms of biological role, important as a means of generating NADPH for biosynthetic reactions. This is NADP-dependent glyceraldehyde-3-phosphate dehydrogenase (GAPN) from Nicotiana plumbaginifolia (Leadwort-leaved tobacco).